Reading from the N-terminus, the 713-residue chain is Elongation factor G (713 aa).

Residues 8–290 (ERYRNFGIMA…GVIQLLPSPV (283 aa)) enclose the tr-type G domain. GTP contacts are provided by residues 17 to 24 (AHIDAGKT), 88 to 92 (DTPGH), and 142 to 145 (NKMD).

It belongs to the TRAFAC class translation factor GTPase superfamily. Classic translation factor GTPase family. EF-G/EF-2 subfamily.

It localises to the cytoplasm. In terms of biological role, catalyzes the GTP-dependent ribosomal translocation step during translation elongation. During this step, the ribosome changes from the pre-translocational (PRE) to the post-translocational (POST) state as the newly formed A-site-bound peptidyl-tRNA and P-site-bound deacylated tRNA move to the P and E sites, respectively. Catalyzes the coordinated movement of the two tRNA molecules, the mRNA and conformational changes in the ribosome. In Stenotrophomonas maltophilia (strain K279a), this protein is Elongation factor G.